Reading from the N-terminus, the 197-residue chain is Pyridoxal 5'-phosphate synthase subunit PdxT (197 aa).

53 to 55 (GES) lines the L-glutamine pocket. Cys-85 functions as the Nucleophile in the catalytic mechanism. Residues Arg-114 and 142 to 143 (IR) contribute to the L-glutamine site. Active-site charge relay system residues include His-179 and Glu-181.

This sequence belongs to the glutaminase PdxT/SNO family. In the presence of PdxS, forms a dodecamer of heterodimers. Only shows activity in the heterodimer.

The enzyme catalyses aldehydo-D-ribose 5-phosphate + D-glyceraldehyde 3-phosphate + L-glutamine = pyridoxal 5'-phosphate + L-glutamate + phosphate + 3 H2O + H(+). The catalysed reaction is L-glutamine + H2O = L-glutamate + NH4(+). Its pathway is cofactor biosynthesis; pyridoxal 5'-phosphate biosynthesis. In terms of biological role, catalyzes the hydrolysis of glutamine to glutamate and ammonia as part of the biosynthesis of pyridoxal 5'-phosphate. The resulting ammonia molecule is channeled to the active site of PdxS. The protein is Pyridoxal 5'-phosphate synthase subunit PdxT of Thermococcus kodakarensis (strain ATCC BAA-918 / JCM 12380 / KOD1) (Pyrococcus kodakaraensis (strain KOD1)).